Consider the following 238-residue polypeptide: Ribitol-5-phosphate cytidylyltransferase 2 (238 aa).

Residues Leu7–Gly10 and Gly81–Thr87 each bind CTP.

It belongs to the IspD/TarI cytidylyltransferase family. TarI subfamily.

The enzyme catalyses D-ribitol 5-phosphate + CTP + H(+) = CDP-L-ribitol + diphosphate. The protein operates within cell wall biogenesis; poly(ribitol phosphate) teichoic acid biosynthesis. Functionally, catalyzes the transfer of the cytidylyl group of CTP to D-ribitol 5-phosphate. The sequence is that of Ribitol-5-phosphate cytidylyltransferase 2 from Staphylococcus aureus (strain MRSA252).